A 136-amino-acid chain; its full sequence is Probable acyltransferase SID5 (136 aa).

It functions in the pathway siderophore biosynthesis. In terms of biological role, probable acyltransferase; part of the gene cluster that mediates the biosynthesis of hydroxamate-containing siderophores that play a critical role in virulence via intracellular iron acquisition during macrophage infection. The chain is Probable acyltransferase SID5 from Ajellomyces capsulatus (Darling's disease fungus).